The chain runs to 667 residues: Acetoacetyl-CoA synthetase (667 aa).

The protein belongs to the ATP-dependent AMP-binding enzyme family.

It is found in the cytoplasm. The protein localises to the cytosol. The catalysed reaction is acetoacetate + ATP + CoA = acetoacetyl-CoA + AMP + diphosphate. Converts acetoacetate to acetoacetyl-CoA in the cytosol. Ketone body-utilizing enzyme, responsible for the synthesis of cholesterol and fatty acids. The sequence is that of Acetoacetyl-CoA synthetase (AACS) from Gallus gallus (Chicken).